The following is a 316-amino-acid chain: FAD:protein FMN transferase (316 aa).

Residues M14, 88-90 (AFN), and D146 each bind FAD. Residue A149 participates in Mg(2+) binding. FAD-binding residues include K152 and L231. Residues D257 and T261 each contribute to the Mg(2+) site.

The protein belongs to the ApbE family. Mg(2+) is required as a cofactor.

The protein localises to the cytoplasm. It carries out the reaction L-threonyl-[protein] + FAD = FMN-L-threonyl-[protein] + AMP + H(+). Functionally, flavin transferase that catalyzes the transfer of the FMN moiety of FAD and its covalent binding to the hydroxyl group of a threonine residue in a target flavoprotein. Is responsible for the modification of the fumarate reductase KPK_2907. This chain is FAD:protein FMN transferase, found in Klebsiella pneumoniae (strain 342).